Here is a 265-residue protein sequence, read N- to C-terminus: MDNRPIGFMDSGVGGLTVVKTAQKLLPNEEIIFIGDEARMPYGPRPTAEVVEFSRQMASFLMTKNIKALVIACNTATNAALAVLQAELPIPVIGVILPGAIAANRQTKNQKIGVIATLGTIKSEAYPKALAEINTKLRAYPVACQEFVEIAEKNELHTTAAQKVMNEKLAEFRQDQIDTLILGCTHFPLLEEGIQAAVGPDVTLVDPGVETVHQLIEILTKQALQHAEGPKAQDQYYSTGNIKNFEEIARTFLNQDLRVEEVKID.

Substrate-binding positions include 10–11 and 42–43; these read DS and YG. The active-site Proton donor/acceptor is the C73. A substrate-binding site is contributed by 74–75; sequence NT. C184 serves as the catalytic Proton donor/acceptor. 185-186 is a substrate binding site; it reads TH.

It belongs to the aspartate/glutamate racemases family.

It catalyses the reaction L-glutamate = D-glutamate. The protein operates within cell wall biogenesis; peptidoglycan biosynthesis. Its function is as follows. Provides the (R)-glutamate required for cell wall biosynthesis. The protein is Glutamate racemase of Pediococcus pentosaceus (strain ATCC 25745 / CCUG 21536 / LMG 10740 / 183-1w).